The following is a 417-amino-acid chain: Peptidyl-Asp metalloendopeptidase (417 aa).

An N-terminal signal peptide occupies residues 1–25 (MLSRSIGKAAGGLVLGLSVAAAAHA). Residue His327 coordinates Zn(2+). Glu328 is an active-site residue. Zn(2+)-binding residues include His331 and His337.

Belongs to the peptidase M72 family. Requires Zn(2+) as cofactor.

It carries out the reaction Cleavage of Xaa-|-Asp, Xaa-|-Glu and Xaa-|-cysteic acid bonds.. Its function is as follows. Metalloprotease, specifically cleaves on the N-terminal side of aspartyl, glutamyl and cysteic acid residues. In Stenotrophomonas maltophilia (strain R551-3), this protein is Peptidyl-Asp metalloendopeptidase.